The chain runs to 402 residues: NADH-quinone oxidoreductase subunit D (402 aa).

This sequence belongs to the complex I 49 kDa subunit family. NDH-1 is composed of 14 different subunits. Subunits NuoB, C, D, E, F, and G constitute the peripheral sector of the complex.

The protein resides in the cell inner membrane. It catalyses the reaction a quinone + NADH + 5 H(+)(in) = a quinol + NAD(+) + 4 H(+)(out). In terms of biological role, NDH-1 shuttles electrons from NADH, via FMN and iron-sulfur (Fe-S) centers, to quinones in the respiratory chain. The immediate electron acceptor for the enzyme in this species is believed to be ubiquinone. Couples the redox reaction to proton translocation (for every two electrons transferred, four hydrogen ions are translocated across the cytoplasmic membrane), and thus conserves the redox energy in a proton gradient. The sequence is that of NADH-quinone oxidoreductase subunit D from Xanthobacter autotrophicus (strain ATCC BAA-1158 / Py2).